The following is a 163-amino-acid chain: Large ribosomal subunit protein uL13m (163 aa).

S2 carries the post-translational modification N-acetylserine. The propeptide occupies 2-4; it reads SQK.

The protein belongs to the universal ribosomal protein uL13 family. As to quaternary structure, component of the mitochondrial large ribosomal subunit (mt-LSU). Mature yeast 74S mitochondrial ribosomes consist of a small (37S) and a large (54S) subunit. The 37S small subunit contains a 15S ribosomal RNA (15S mt-rRNA) and 34 different proteins. The 54S large subunit contains a 21S rRNA (21S mt-rRNA) and 46 different proteins.

It localises to the mitochondrion. Functionally, component of the mitochondrial ribosome (mitoribosome), a dedicated translation machinery responsible for the synthesis of mitochondrial genome-encoded proteins, including at least some of the essential transmembrane subunits of the mitochondrial respiratory chain. The mitoribosomes are attached to the mitochondrial inner membrane and translation products are cotranslationally integrated into the membrane. This chain is Large ribosomal subunit protein uL13m (MRPL23), found in Saccharomyces cerevisiae (strain ATCC 204508 / S288c) (Baker's yeast).